Consider the following 180-residue polypeptide: Cytidylate kinase (180 aa).

7-15 (GLPGSGTST) provides a ligand contact to ATP.

It belongs to the cytidylate kinase family. Type 2 subfamily.

The protein resides in the cytoplasm. It carries out the reaction CMP + ATP = CDP + ADP. The catalysed reaction is dCMP + ATP = dCDP + ADP. In Methanosarcina mazei (strain ATCC BAA-159 / DSM 3647 / Goe1 / Go1 / JCM 11833 / OCM 88) (Methanosarcina frisia), this protein is Cytidylate kinase (cmk).